Here is a 382-residue protein sequence, read N- to C-terminus: uncharacterized protein (382 aa).

12 helical membrane-spanning segments follow: residues 14–34, 45–65, 79–99, 102–122, 131–151, 157–177, 204–224, 235–255, 270–290, 291–311, 325–345, and 348–368; these read GLLL…LWLA, VVSS…GYVI, FIFA…SWLA, FVAG…LMCS, LLAA…LLVS, LMSV…PLLF, LGVN…GLMP, ASIG…QWPI, VQVF…AMAP, ALFI…AWAC, ALLL…AMLM, and FSDN…LLML.

This sequence belongs to the major facilitator superfamily. YcaD (TC 2.A.1.26) family.

It localises to the cell inner membrane. This is an uncharacterized protein from Shigella dysenteriae serotype 1 (strain Sd197).